A 564-amino-acid chain; its full sequence is Large neutral amino acids transporter small subunit 3 (564 aa).

A helical transmembrane segment spans residues 20 to 40 (VVENLFFSAVLLGWASLLIML). N-linked (GlcNAc...) asparagine glycosylation is found at N54 and N57. Helical transmembrane passes span 78 to 98 (LGFTIGSFLLSATTLPLGILM), 105 to 124 (PLRLVGSACFAASCTLMALA), 131 to 151 (LSPLIFLALSLNGFAGICLTF), 165 to 185 (STFMALMIGSYASSAITFPGI), and 191 to 211 (AGVPFTVIMFTWSGLACLIFL). Residues S262 and S267 each carry the phosphoserine modification. 2 consecutive transmembrane segments (helical) span residues 303–323 (IFLWSLVTMGMTQLRVIFYMG) and 357–377 (SIFGVMQLLCLLTCPLIGYIM). N396 is a glycosylation site (N-linked (GlcNAc...) asparagine). S398 bears the Phosphoserine mark. Transmembrane regions (helical) follow at residues 424–444 (AINAFTLTNILLVGFGIACLI), 451–471 (LLAFVLHTIVRGFFHSACGGL), 490–510 (LISAVFALLQQLLFMAMVGPL), and 515–535 (FWVNLGLLLLSFLGFLLPSYL). An N-linked (GlcNAc...) asparagine glycan is attached at N558.

It belongs to the SLC43A transporter (TC 2.A.1.44) family. Expressed in the kidney cortex as well as liver, pancreas, and skeletal muscle. In kidney expressed in the glomerular tuft (at protein level). Expressed in liver, skeletal muscle and pancreas (at protein level).

It is found in the cell membrane. The protein localises to the apical cell membrane. Its subcellular location is the endoplasmic reticulum membrane. It carries out the reaction D-leucine(in) = D-leucine(out). It catalyses the reaction L-leucine(in) = L-leucine(out). The enzyme catalyses L-isoleucine(in) = L-isoleucine(out). The catalysed reaction is L-methionine(in) = L-methionine(out). It carries out the reaction L-phenylalanine(in) = L-phenylalanine(out). It catalyses the reaction L-valine(in) = L-valine(out). Functionally, uniport that mediates the transport of neutral amino acids such as L-leucine, L-isoleucine, L-valine, and L-phenylalanine. The transport activity is sodium ions-independent, electroneutral and mediated by a facilitated diffusion. This Mus musculus (Mouse) protein is Large neutral amino acids transporter small subunit 3.